The primary structure comprises 250 residues: Probable transcriptional regulatory protein Paes_0496 (250 aa).

Belongs to the TACO1 family.

It is found in the cytoplasm. In Prosthecochloris aestuarii (strain DSM 271 / SK 413), this protein is Probable transcriptional regulatory protein Paes_0496.